The primary structure comprises 271 residues: Bis(5'-nucleosyl)-tetraphosphatase, symmetrical (271 aa).

This sequence belongs to the Ap4A hydrolase family.

It carries out the reaction P(1),P(4)-bis(5'-adenosyl) tetraphosphate + H2O = 2 ADP + 2 H(+). Hydrolyzes diadenosine 5',5'''-P1,P4-tetraphosphate to yield ADP. In Aliivibrio fischeri (strain ATCC 700601 / ES114) (Vibrio fischeri), this protein is Bis(5'-nucleosyl)-tetraphosphatase, symmetrical.